We begin with the raw amino-acid sequence, 209 residues long: Large ribosomal subunit protein uL4 (209 aa).

The segment at 50 to 89 is disordered; that stretch reads MTKTKGLVSGGGKKPFKQKGTGGARQGSSRSILMPGGGTA.

This sequence belongs to the universal ribosomal protein uL4 family. Part of the 50S ribosomal subunit.

Its function is as follows. One of the primary rRNA binding proteins, this protein initially binds near the 5'-end of the 23S rRNA. It is important during the early stages of 50S assembly. It makes multiple contacts with different domains of the 23S rRNA in the assembled 50S subunit and ribosome. In terms of biological role, forms part of the polypeptide exit tunnel. The sequence is that of Large ribosomal subunit protein uL4 from Bdellovibrio bacteriovorus (strain ATCC 15356 / DSM 50701 / NCIMB 9529 / HD100).